Reading from the N-terminus, the 432-residue chain is Bifunctional protein GlmU (432 aa).

The tract at residues 1-223 (MGKKSIIILA…EENFKGVNSK (223 aa)) is pyrophosphorylase. UDP-N-acetyl-alpha-D-glucosamine-binding positions include 9–12 (LAAG), lysine 23, glutamine 75, and 82–83 (GT). Aspartate 103 is a Mg(2+) binding site. Glycine 135, glutamate 149, asparagine 164, and asparagine 221 together coordinate UDP-N-acetyl-alpha-D-glucosamine. Asparagine 221 serves as a coordination point for Mg(2+). The tract at residues 224 to 244 (VELADAEVIHQNRIKKEFMKA) is linker. The tract at residues 245–432 (GVIMRLPDTI…FYKHFSSKKK (188 aa)) is N-acetyltransferase. The UDP-N-acetyl-alpha-D-glucosamine site is built by arginine 308 and lysine 325. Residue histidine 336 is the Proton acceptor of the active site. Positions 339 and 350 each coordinate UDP-N-acetyl-alpha-D-glucosamine. Acetyl-CoA-binding positions include 359–360 (NY), serine 378, alanine 396, and arginine 413.

It in the N-terminal section; belongs to the N-acetylglucosamine-1-phosphate uridyltransferase family. This sequence in the C-terminal section; belongs to the transferase hexapeptide repeat family. As to quaternary structure, homotrimer. Mg(2+) serves as cofactor.

The protein localises to the cytoplasm. The enzyme catalyses alpha-D-glucosamine 1-phosphate + acetyl-CoA = N-acetyl-alpha-D-glucosamine 1-phosphate + CoA + H(+). It catalyses the reaction N-acetyl-alpha-D-glucosamine 1-phosphate + UTP + H(+) = UDP-N-acetyl-alpha-D-glucosamine + diphosphate. It participates in nucleotide-sugar biosynthesis; UDP-N-acetyl-alpha-D-glucosamine biosynthesis; N-acetyl-alpha-D-glucosamine 1-phosphate from alpha-D-glucosamine 6-phosphate (route II): step 2/2. Its pathway is nucleotide-sugar biosynthesis; UDP-N-acetyl-alpha-D-glucosamine biosynthesis; UDP-N-acetyl-alpha-D-glucosamine from N-acetyl-alpha-D-glucosamine 1-phosphate: step 1/1. The protein operates within bacterial outer membrane biogenesis; LPS lipid A biosynthesis. Functionally, catalyzes the last two sequential reactions in the de novo biosynthetic pathway for UDP-N-acetylglucosamine (UDP-GlcNAc). The C-terminal domain catalyzes the transfer of acetyl group from acetyl coenzyme A to glucosamine-1-phosphate (GlcN-1-P) to produce N-acetylglucosamine-1-phosphate (GlcNAc-1-P), which is converted into UDP-GlcNAc by the transfer of uridine 5-monophosphate (from uridine 5-triphosphate), a reaction catalyzed by the N-terminal domain. The sequence is that of Bifunctional protein GlmU from Aliarcobacter butzleri (strain RM4018) (Arcobacter butzleri).